The primary structure comprises 35 residues: N-acylglucosamine 2-epimerase (35 aa).

Residues Leu1–Leu21 are leucine-zipper.

This sequence belongs to the N-acylglucosamine 2-epimerase family. Homodimer. Forms a heterodimer with renin and inhibits its activity.

The catalysed reaction is an N-acyl-D-glucosamine = an N-acyl-D-mannosamine. The protein operates within amino-sugar metabolism; N-acetylneuraminate degradation. Its function is as follows. Catalyzes the interconversion of N-acetylglucosamine to N-acetylmannosamine. Involved in the N-glycolylneuraminic acid (Neu5Gc) degradation pathway. This chain is N-acylglucosamine 2-epimerase, found in Canis lupus familiaris (Dog).